A 248-amino-acid chain; its full sequence is Granzyme C (248 aa).

An N-terminal signal peptide occupies residues 1–18 (MPPVLILLTLLLPLRAGA). The propeptide occupies 19–20 (EE). Residues 21–246 (IIGGNEISPH…FVSWIKKTMK (226 aa)) enclose the Peptidase S1 domain. A disulfide bridge connects residues Cys-50 and Cys-66. Active-site charge relay system residues include His-65 and Asp-109. 2 disulfides stabilise this stretch: Cys-143–Cys-210 and Cys-174–Cys-189. The active-site Charge relay system is Ser-204.

The protein belongs to the peptidase S1 family. Granzyme subfamily.

It localises to the cytolytic granule. Its function is as follows. This enzyme is probably necessary for target cell lysis in cell-mediated immune responses. The sequence is that of Granzyme C (Gzmc) from Mus musculus (Mouse).